The chain runs to 306 residues: Curved DNA-binding protein (306 aa).

Residues 5–69 form the J domain; the sequence is DYYAIMGVKP…QRRAEYDQMW (65 aa).

Its subcellular location is the cytoplasm. The protein resides in the nucleoid. Functionally, DNA-binding protein that preferentially recognizes a curved DNA sequence. It is probably a functional analog of DnaJ; displays overlapping activities with DnaJ, but functions under different conditions, probably acting as a molecular chaperone in an adaptive response to environmental stresses other than heat shock. Lacks autonomous chaperone activity; binds native substrates and targets them for recognition by DnaK. Its activity is inhibited by the binding of CbpM. In Escherichia fergusonii (strain ATCC 35469 / DSM 13698 / CCUG 18766 / IAM 14443 / JCM 21226 / LMG 7866 / NBRC 102419 / NCTC 12128 / CDC 0568-73), this protein is Curved DNA-binding protein.